The following is a 532-amino-acid chain: Glucose-6-phosphate isomerase (532 aa).

The active-site Proton donor is the Glu330. Residues His359 and Lys460 contribute to the active site.

This sequence belongs to the GPI family.

It is found in the cytoplasm. The catalysed reaction is alpha-D-glucose 6-phosphate = beta-D-fructose 6-phosphate. The protein operates within carbohydrate biosynthesis; gluconeogenesis. It functions in the pathway carbohydrate degradation; glycolysis; D-glyceraldehyde 3-phosphate and glycerone phosphate from D-glucose: step 2/4. In terms of biological role, catalyzes the reversible isomerization of glucose-6-phosphate to fructose-6-phosphate. The sequence is that of Glucose-6-phosphate isomerase from Prochlorococcus marinus (strain MIT 9211).